Here is a 123-residue protein sequence, read N- to C-terminus: Small ribosomal subunit protein eS25 (123 aa).

Over residues 1–13 (MPPKKDTKGDSKK) the composition is skewed to basic and acidic residues. The tract at residues 1 to 34 (MPPKKDTKGDSKKGQKAKAGSGGGKAKKKKWSKG) is disordered. Positions 25 to 34 (KAKKKKWSKG) are enriched in basic residues.

Belongs to the eukaryotic ribosomal protein eS25 family.

The polypeptide is Small ribosomal subunit protein eS25 (RPS25) (Branchiostoma belcheri (Amphioxus)).